A 208-amino-acid chain; its full sequence is Uracil phosphoribosyltransferase (208 aa).

5-phospho-alpha-D-ribose 1-diphosphate is bound by residues Arg-78, Arg-103, and 130–138 (DPMLATGGS). Uracil-binding positions include Ile-193 and 198–200 (GDA). Asp-199 serves as a coordination point for 5-phospho-alpha-D-ribose 1-diphosphate.

Belongs to the UPRTase family. The cofactor is Mg(2+).

It catalyses the reaction UMP + diphosphate = 5-phospho-alpha-D-ribose 1-diphosphate + uracil. The protein operates within pyrimidine metabolism; UMP biosynthesis via salvage pathway; UMP from uracil: step 1/1. With respect to regulation, allosterically activated by GTP. Catalyzes the conversion of uracil and 5-phospho-alpha-D-ribose 1-diphosphate (PRPP) to UMP and diphosphate. In Shewanella sp. (strain ANA-3), this protein is Uracil phosphoribosyltransferase.